The chain runs to 115 residues: Large ribosomal subunit protein bL19 (115 aa).

It belongs to the bacterial ribosomal protein bL19 family.

This protein is located at the 30S-50S ribosomal subunit interface and may play a role in the structure and function of the aminoacyl-tRNA binding site. The polypeptide is Large ribosomal subunit protein bL19 (Nitratidesulfovibrio vulgaris (strain DSM 19637 / Miyazaki F) (Desulfovibrio vulgaris)).